We begin with the raw amino-acid sequence, 127 residues long: Membrane-bound lysozyme inhibitor of C-type lysozyme (127 aa).

Residues 1-18 form the signal peptide; sequence MKKALWLLLAAVPVVLVA. Cys19 carries N-palmitoyl cysteine lipidation. Cys19 is lipidated: S-diacylglycerol cysteine. The cysteines at positions 51 and 124 are disulfide-linked.

Belongs to the MliC family. Type 2 subfamily. In terms of assembly, homodimer.

The protein localises to the cell outer membrane. Functionally, specifically inhibits C-type lysozymes. The polypeptide is Membrane-bound lysozyme inhibitor of C-type lysozyme (Pseudomonas aeruginosa (strain ATCC 15692 / DSM 22644 / CIP 104116 / JCM 14847 / LMG 12228 / 1C / PRS 101 / PAO1)).